Consider the following 593-residue polypeptide: Zinc metalloproteinase-disintegrin-like kaouthiagin-like (593 aa).

An N-terminal signal peptide occupies residues 1–20; it reads MIQALLVIICLAVFPHQGSS. The propeptide occupies 21 to 196; the sequence is IILESGNVND…KTSQFTNTPE (176 aa). A Peptidase M12B domain is found at 205 to 400; the sequence is KYIEFYVIVD…DRPQCILNKP (196 aa). Residues glutamate 208 and aspartate 292 each contribute to the Ca(2+) site. 3 disulfides stabilise this stretch: cysteine 316/cysteine 395, cysteine 356/cysteine 379, and cysteine 358/cysteine 363. A glycan (N-linked (GlcNAc...) asparagine) is linked at asparagine 319. Residues histidine 341, histidine 345, and histidine 351 each coordinate Zn(2+). Residues cysteine 395, asparagine 398, isoleucine 410, asparagine 413, phenylalanine 415, glutamate 417, glutamate 420, and aspartate 423 each coordinate Ca(2+). The Disintegrin domain maps to 408–477; that stretch reads PPICGNYFVE…ECPTDSLQRN (70 aa). 12 disulfide bridges follow: cysteine 411–cysteine 440, cysteine 422–cysteine 435, cysteine 424–cysteine 430, cysteine 434–cysteine 462, cysteine 449–cysteine 469, cysteine 456–cysteine 488, cysteine 481–cysteine 493, cysteine 500–cysteine 550, cysteine 515–cysteine 558, cysteine 528–cysteine 538, cysteine 545–cysteine 581, and cysteine 575–cysteine 586. Residues 455 to 457 carry the D/ECD-tripeptide motif; it reads DCD. 5 residues coordinate Ca(2+): aspartate 457, leucine 458, glutamate 460, aspartate 472, and serine 473. N-linked (GlcNAc...) asparagine glycosylation is present at asparagine 490.

It belongs to the venom metalloproteinase (M12B) family. P-III subfamily. P-IIIa sub-subfamily. As to quaternary structure, monomer. It depends on Zn(2+) as a cofactor. In terms of tissue distribution, expressed by the venom gland.

Its subcellular location is the secreted. Its function is as follows. Snake venom zinc metalloproteinase that cleaves the membrane-bound precursor of TNF-alpha (TNF) into its mature soluble form showing the same digestion pattern than ADAM17. This is Zinc metalloproteinase-disintegrin-like kaouthiagin-like from Naja atra (Chinese cobra).